The following is a 679-amino-acid chain: Methionine--tRNA ligase (679 aa).

The 'HIGH' region motif lies at 14–24 (PYANGSIHLGH). Residues Cys-145, Cys-148, Cys-158, and Cys-161 each contribute to the Zn(2+) site. The 'KMSKS' region motif lies at 331 to 335 (KMSKS). Lys-334 serves as a coordination point for ATP. Residues 577–679 (TFAAVDLRVA…SGAKPGQRIK (103 aa)) enclose the tRNA-binding domain.

It belongs to the class-I aminoacyl-tRNA synthetase family. MetG type 1 subfamily. In terms of assembly, homodimer. Zn(2+) serves as cofactor.

Its subcellular location is the cytoplasm. It carries out the reaction tRNA(Met) + L-methionine + ATP = L-methionyl-tRNA(Met) + AMP + diphosphate. Functionally, is required not only for elongation of protein synthesis but also for the initiation of all mRNA translation through initiator tRNA(fMet) aminoacylation. This is Methionine--tRNA ligase from Pseudomonas entomophila (strain L48).